The primary structure comprises 84 residues: MDWRHKAVCRDEDPELFFPVGNSGPALAQIADAKLVCNRCPVTTECLSWALNTGQDSGVWGGMSEDERRALKRRNARTKARTGV.

Positions 8–70 (VCRDEDPELF…GGMSEDERRA (63 aa)) constitute a 4Fe-4S Wbl-type domain. Cysteine 9, cysteine 37, cysteine 40, and cysteine 46 together coordinate [4Fe-4S] cluster.

It belongs to the WhiB family. As to quaternary structure, homodimer. [4Fe-4S] cluster serves as cofactor. The Fe-S cluster can be nitrosylated by nitric oxide (NO). In terms of processing, upon Fe-S cluster removal intramolecular disulfide bonds are formed.

The protein resides in the cytoplasm. Its function is as follows. Acts as a transcriptional regulator. Probably redox-responsive. The apo- but not holo-form probably binds DNA. This chain is Transcriptional regulator WhiB1 (whiB1), found in Mycobacterium tuberculosis (strain CDC 1551 / Oshkosh).